The sequence spans 379 residues: MVFFTCNACGESVKKIQVEKHVSVCRNCECLSCIDCGKDFWGDDYKNHVKCISEDQKYGGKGYEGKTHKGDIKQQAWIQKISELIKRPNVSPKVRELLEQISAFDNVPRKKAKFQNWMKNSLKVHNESILDQVWNIFSEASNSEPVNKEQDQRPLHPVANPHAEISTKVPASKVKDAVEQQGEVKKNKRERKEERQKKRKREKKELKLENHQENSRNQKPKKRKKGQEADLEAGGEEVPEANGSAGKRSKKKKQRKDSASEEEARVGAGKRKRRHSEVETDSKKKKMKLPEHPEGGEPEDDEAPAKGKFNWKGTIKAILKQAPDNEITIKKLRKKVLAQYYTVTDEHHRSEEELLVIFNKKISKNPTFKLLKDKVKLVK.

2 consecutive C2HC LYAR-type zinc fingers follow at residues 1-26 (MVFF…SVCR) and 28-52 (CECL…VKCI). Zn(2+) is bound by residues Cys-6 and Cys-9. A Glycyl lysine isopeptide (Lys-Gly) (interchain with G-Cter in SUMO2) cross-link involves residue Lys-14. Zn(2+)-binding residues include His-21, Cys-25, Cys-33, Cys-36, His-48, and Cys-51. The tract at residues 161 to 307 (PHAEISTKVP…PEDDEAPAKG (147 aa)) is disordered. Basic and acidic residues-rich tracts occupy residues 173–196 (KVKD…EERQ) and 203–216 (KKEL…ENSR). A coiled-coil region spans residues 175 to 219 (KDAVEQQGEVKKNKRERKEERQKKRKREKKELKLENHQENSRNQK). Residue Lys-207 forms a Glycyl lysine isopeptide (Lys-Gly) (interchain with G-Cter in SUMO2) linkage. Ser-215 is modified (phosphoserine). Acidic residues predominate over residues 229–239 (ADLEAGGEEVP). Residue Ser-244 is modified to Phosphoserine. 2 stretches are compositionally biased toward basic and acidic residues: residues 256–265 (KDSASEEEAR) and 276–295 (SEVE…HPEG).

In terms of assembly, interacts with PRMT5; this interaction is direct. Interacts with GNL2 and RPL23A. Interacts with nucleolin/NCL; this interaction is direct. Interacts with phosphorylated IRF3; this interaction impairs IRF3 DNA-binding activity. Predominantly expressed in testis.

It is found in the nucleus. It localises to the nucleolus. The protein resides in the cytoplasm. Its subcellular location is the cell projection. The protein localises to the cilium. It is found in the photoreceptor outer segment. Functionally, plays a role in the maintenance of the appropriate processing of 47S/45S pre-rRNA to 32S/30S pre-rRNAs and their subsequent processing to produce 18S and 28S rRNAs. Also acts at the level of transcription regulation. Along with PRMT5, binds the gamma-globin (HBG1/HBG2) promoter and represses its expression. In neuroblastoma cells, may also repress the expression of oxidative stress genes, including CHAC1, HMOX1, SLC7A11, ULBP1 and SNORD41 that encodes a small nucleolar RNA. Preferentially binds to a DNA motif containing 5'-GGTTAT-3'. Negatively regulates the antiviral innate immune response by targeting IRF3 and impairing its DNA-binding activity. In addition, inhibits NF-kappa-B-mediated expression of pro-inflammatory cytokines. Stimulates phagocytosis of photoreceptor outer segments by retinal pigment epithelial cells. Prevents nucleolin/NCL self-cleavage, maintaining a normal steady-state level of NCL protein in undifferentiated embryonic stem cells (ESCs), which in turn is essential for ESC self-renewal. The protein is Cell growth-regulating nucleolar protein (LYAR) of Homo sapiens (Human).